An 88-amino-acid polypeptide reads, in one-letter code: RNA-binding protein Hfq (88 aa).

One can recognise a Sm domain in the interval 9 to 68; that stretch reads DPFLNALRCERIPVSIYLVNGIKLQGQIESFDQFVILLKNTVNQMVYKHAISTVVPARAV. The disordered stretch occupies residues 66–88; sequence RAVSHHTASDRPQGERPQETTEE. Residues 72-88 are compositionally biased toward basic and acidic residues; sequence TASDRPQGERPQETTEE.

This sequence belongs to the Hfq family. In terms of assembly, homohexamer.

Functionally, RNA chaperone that binds small regulatory RNA (sRNAs) and mRNAs to facilitate mRNA translational regulation in response to envelope stress, environmental stress and changes in metabolite concentrations. Also binds with high specificity to tRNAs. This chain is RNA-binding protein Hfq, found in Aliivibrio salmonicida (strain LFI1238) (Vibrio salmonicida (strain LFI1238)).